A 315-amino-acid polypeptide reads, in one-letter code: Adenine deaminase (315 aa).

Zn(2+) contacts are provided by His-14, His-16, and His-194. Glu-197 serves as the catalytic Proton donor. Zn(2+) is bound at residue Asp-275. Asp-276 contacts substrate.

Belongs to the metallo-dependent hydrolases superfamily. Adenosine and AMP deaminases family. Adenine deaminase type 2 subfamily. Zn(2+) is required as a cofactor.

The catalysed reaction is adenine + H2O + H(+) = hypoxanthine + NH4(+). Catalyzes the hydrolytic deamination of adenine to hypoxanthine. Plays an important role in the purine salvage pathway and in nitrogen catabolism. In Ectopseudomonas mendocina (strain ymp) (Pseudomonas mendocina), this protein is Adenine deaminase.